Here is a 113-residue protein sequence, read N- to C-terminus: Cell cycle protein GpsB (113 aa).

The stretch at 37-63 (KDYETYATLVKSLRQEIADLKEELTRK) forms a coiled coil. The tract at residues 61-82 (TRKPQVSSAPSPSHPDPIDVAA) is disordered.

It belongs to the GpsB family. As to quaternary structure, forms polymers through the coiled coil domains. Interacts with PBP1, MreC and EzrA.

It localises to the cytoplasm. Divisome component that associates with the complex late in its assembly, after the Z-ring is formed, and is dependent on DivIC and PBP2B for its recruitment to the divisome. Together with EzrA, is a key component of the system that regulates PBP1 localization during cell cycle progression. Its main role could be the removal of PBP1 from the cell pole after pole maturation is completed. Also contributes to the recruitment of PBP1 to the division complex. Not essential for septum formation. This Streptococcus pneumoniae (strain ATCC 700669 / Spain 23F-1) protein is Cell cycle protein GpsB.